We begin with the raw amino-acid sequence, 327 residues long: Sphingomyelin synthase-related 2 (327 aa).

The next 5 membrane-spanning stretches (helical) occupy residues 54–74, 99–119, 131–151, 192–212, and 220–240; these read LLATAMVGVGWLSNEVALAWV, AIRIAEYIMMILLISALLVMF, VFFCIAMAYSFRALCVTIFQV, LCGDLIVSGHTLTIFTAFLVF, and LQPLSHIYHVLAFTALFSILL. H201 is an active-site residue. Topologically, residues 241–327 are cytoplasmic; it reads ARKHYMIDIV…TLKKSRRSFE (87 aa). Residues H244 and D248 contribute to the active site.

Belongs to the sphingomyelin synthase family.

The protein localises to the membrane. This chain is Sphingomyelin synthase-related 2, found in Caenorhabditis elegans.